The primary structure comprises 184 residues: Ribosome-recycling factor (184 aa).

This sequence belongs to the RRF family.

It is found in the cytoplasm. Its function is as follows. Responsible for the release of ribosomes from messenger RNA at the termination of protein biosynthesis. May increase the efficiency of translation by recycling ribosomes from one round of translation to another. The protein is Ribosome-recycling factor of Clostridium botulinum (strain Loch Maree / Type A3).